We begin with the raw amino-acid sequence, 302 residues long: 4-hydroxy-tetrahydrodipicolinate synthase (302 aa).

Threonine 46 provides a ligand contact to pyruvate. The active-site Proton donor/acceptor is tyrosine 135. Lysine 164 (schiff-base intermediate with substrate) is an active-site residue. Valine 206 serves as a coordination point for pyruvate.

The protein belongs to the DapA family. In terms of assembly, homotetramer; dimer of dimers.

It localises to the cytoplasm. The catalysed reaction is L-aspartate 4-semialdehyde + pyruvate = (2S,4S)-4-hydroxy-2,3,4,5-tetrahydrodipicolinate + H2O + H(+). Its pathway is amino-acid biosynthesis; L-lysine biosynthesis via DAP pathway; (S)-tetrahydrodipicolinate from L-aspartate: step 3/4. Functionally, catalyzes the condensation of (S)-aspartate-beta-semialdehyde [(S)-ASA] and pyruvate to 4-hydroxy-tetrahydrodipicolinate (HTPA). This is 4-hydroxy-tetrahydrodipicolinate synthase from Acidobacterium capsulatum (strain ATCC 51196 / DSM 11244 / BCRC 80197 / JCM 7670 / NBRC 15755 / NCIMB 13165 / 161).